The chain runs to 248 residues: Type III pantothenate kinase (248 aa).

6–13 (DCGNSFIK) contacts ATP. Substrate is bound by residues tyrosine 92 and 99-102 (GLDR). Aspartate 101 serves as the catalytic Proton acceptor. Aspartate 121 is a K(+) binding site. Threonine 124 contributes to the ATP binding site. Threonine 180 lines the substrate pocket.

The protein belongs to the type III pantothenate kinase family. Homodimer. NH4(+) serves as cofactor. The cofactor is K(+).

The protein resides in the cytoplasm. It carries out the reaction (R)-pantothenate + ATP = (R)-4'-phosphopantothenate + ADP + H(+). It participates in cofactor biosynthesis; coenzyme A biosynthesis; CoA from (R)-pantothenate: step 1/5. In terms of biological role, catalyzes the phosphorylation of pantothenate (Pan), the first step in CoA biosynthesis. The chain is Type III pantothenate kinase from Ectopseudomonas mendocina (strain ymp) (Pseudomonas mendocina).